The sequence spans 393 residues: MKRPVTGKDLMIVNMGPHHPSMHGVLRLIVTLDGEDVVDCEPILGYLHRGMEKIAENRAIIQYLPYVTRWDYLATMFTEAITVNGPEQLGNIQVPKRASYIRVIMLELSRIASHLLWLGPFMADIGAQTPFFYIFREREFVYDLFEAATGMRMMHNFFRIGGIAADLPYGWIDKCLDFCDYFLTEVIEYQKLITRNPIFLERVEGVGIIGGEEAINWGLSGPMLRASGIPWDLRKVDRYESYDEFEWEIQWQKQGDSLARYLVRLSEMTESIKIIQQALEGLPGGPYENLESRGFDRKRNPEWNDFEYRFISKKPSPTFELSKQELYVRVEAPKGELGIFIIGDQSGFPWRWKIRPPGFINLQILPELVKRMKLADIMTILGSIDIIMGEVDR.

Belongs to the complex I 49 kDa subunit family. NDH is composed of at least 16 different subunits, 5 of which are encoded in the nucleus.

It localises to the plastid. The protein localises to the chloroplast thylakoid membrane. It carries out the reaction a plastoquinone + NADH + (n+1) H(+)(in) = a plastoquinol + NAD(+) + n H(+)(out). The enzyme catalyses a plastoquinone + NADPH + (n+1) H(+)(in) = a plastoquinol + NADP(+) + n H(+)(out). Functionally, NDH shuttles electrons from NAD(P)H:plastoquinone, via FMN and iron-sulfur (Fe-S) centers, to quinones in the photosynthetic chain and possibly in a chloroplast respiratory chain. The immediate electron acceptor for the enzyme in this species is believed to be plastoquinone. Couples the redox reaction to proton translocation, and thus conserves the redox energy in a proton gradient. The chain is NAD(P)H-quinone oxidoreductase subunit H, chloroplastic from Arabis hirsuta (Hairy rock-cress).